Consider the following 277-residue polypeptide: Methylamine utilization protein MauF (277 aa).

A run of 7 helical transmembrane segments spans residues 33–53, 59–79, 111–131, 132–152, 179–199, 205–225, and 257–277; these read IAVL…LASA, LWAV…WSPC, YGLG…IAGF, SGFG…YGAH, WVIG…YVQT, MTLA…VALF, and ALAD…LALI.

Its subcellular location is the cell membrane. It functions in the pathway one-carbon metabolism; methylamine degradation. The polypeptide is Methylamine utilization protein MauF (mauF) (Paracoccus denitrificans).